We begin with the raw amino-acid sequence, 468 residues long: 6-phospho-beta-galactosidase (468 aa).

Positions 19, 116, 159, 160, and 297 each coordinate D-galactose 6-phosphate. Residue Glu-160 is the Proton donor of the active site. Glu-375 serves as the catalytic Nucleophile. Residues Ser-428, Trp-429, Lys-435, and Tyr-437 each contribute to the D-galactose 6-phosphate site.

The protein belongs to the glycosyl hydrolase 1 family.

The catalysed reaction is a 6-phospho-beta-D-galactoside + H2O = D-galactose 6-phosphate + an alcohol. It functions in the pathway carbohydrate metabolism; lactose degradation; D-galactose 6-phosphate and beta-D-glucose from lactose 6-phosphate: step 1/1. The sequence is that of 6-phospho-beta-galactosidase from Streptococcus pyogenes serotype M18 (strain MGAS8232).